The following is an 859-amino-acid chain: Ubiquitin carboxyl-terminal hydrolase 23 (859 aa).

Residues 1-24 show a composition bias toward polar residues; it reads MEVATSSTEITIQTDRDPSSNNNG. Residues 1 to 26 are disordered; the sequence is MEVATSSTEITIQTDRDPSSNNNGSC. The USP domain maps to 107-410; the sequence is AGLQNLGNTC…KAYMLFYVRD (304 aa). The active-site Nucleophile is the Cys116. Catalysis depends on His369, which acts as the Proton acceptor. Disordered regions lie at residues 722–749 and 822–859; these read MISS…ASQN and EESY…AYRI.

Belongs to the peptidase C19 family.

The enzyme catalyses Thiol-dependent hydrolysis of ester, thioester, amide, peptide and isopeptide bonds formed by the C-terminal Gly of ubiquitin (a 76-residue protein attached to proteins as an intracellular targeting signal).. Functionally, recognizes and hydrolyzes the peptide bond at the C-terminal Gly of ubiquitin. Involved in the processing of poly-ubiquitin precursors as well as that of ubiquitinated proteins. The protein is Ubiquitin carboxyl-terminal hydrolase 23 (UBP23) of Arabidopsis thaliana (Mouse-ear cress).